We begin with the raw amino-acid sequence, 277 residues long: Large ribosomal subunit protein uL2m (277 aa).

The tract at residues 225-263 is disordered; it reads AMNPVDHPHGGGEGKTSGGRPSVTPWSWPTKGQPTRSKR. Residues 248-259 are compositionally biased toward polar residues; it reads TPWSWPTKGQPT.

The protein belongs to the universal ribosomal protein uL2 family.

The protein resides in the mitochondrion. The chain is Large ribosomal subunit protein uL2m (RPL2) from Reclinomonas americana.